A 440-amino-acid polypeptide reads, in one-letter code: Thymidine phosphorylase (440 aa).

The protein belongs to the thymidine/pyrimidine-nucleoside phosphorylase family. In terms of assembly, homodimer.

It catalyses the reaction thymidine + phosphate = 2-deoxy-alpha-D-ribose 1-phosphate + thymine. The protein operates within pyrimidine metabolism; dTMP biosynthesis via salvage pathway; dTMP from thymine: step 1/2. The enzymes which catalyze the reversible phosphorolysis of pyrimidine nucleosides are involved in the degradation of these compounds and in their utilization as carbon and energy sources, or in the rescue of pyrimidine bases for nucleotide synthesis. The polypeptide is Thymidine phosphorylase (Cronobacter sakazakii (strain ATCC BAA-894) (Enterobacter sakazakii)).